Consider the following 129-residue polypeptide: MKKHGVLNRDIARILASLGHTDQIVIADCGLPIPEDVECIDVSLKQGVPSFVEVLAEILADMEVEGLIAAEEVKEQNPAVHRALTGTNIPIHYLPHEQFKDTTCKAKAVIRTGEVTPYANVILRSGVIF.

The active-site Proton donor is the His-20. Residues Asp-28, His-96, and 118–120 (YAN) each bind substrate.

This sequence belongs to the RbsD / FucU family. RbsD subfamily. In terms of assembly, homodecamer.

The protein resides in the cytoplasm. The catalysed reaction is beta-D-ribopyranose = beta-D-ribofuranose. It participates in carbohydrate metabolism; D-ribose degradation; D-ribose 5-phosphate from beta-D-ribopyranose: step 1/2. In terms of biological role, catalyzes the interconversion of beta-pyran and beta-furan forms of D-ribose. The sequence is that of D-ribose pyranase from Halalkalibacterium halodurans (strain ATCC BAA-125 / DSM 18197 / FERM 7344 / JCM 9153 / C-125) (Bacillus halodurans).